Consider the following 224-residue polypeptide: Transcriptional regulatory protein DltR (224 aa).

Residues 2–116 (RLLVVEDEKS…ELLARIRLRT (115 aa)) form the Response regulatory domain. D51 is subject to 4-aspartylphosphate. A DNA-binding region (ompR/PhoB-type) is located at residues 124 to 222 (ANQLRLGNIR…TKGFGYSLEE (99 aa)).

In terms of processing, phosphorylated by DltS.

It localises to the cytoplasm. In terms of biological role, member of the two-component regulatory system DltS/DltR. Regulates the expression of the dlt operon. This is Transcriptional regulatory protein DltR (dltR) from Streptococcus agalactiae serotype III (strain NEM316).